The primary structure comprises 105 residues: Large ribosomal subunit protein uL24 (105 aa).

This sequence belongs to the universal ribosomal protein uL24 family. In terms of assembly, part of the 50S ribosomal subunit.

Its function is as follows. One of two assembly initiator proteins, it binds directly to the 5'-end of the 23S rRNA, where it nucleates assembly of the 50S subunit. In terms of biological role, one of the proteins that surrounds the polypeptide exit tunnel on the outside of the subunit. The polypeptide is Large ribosomal subunit protein uL24 (Pseudothermotoga lettingae (strain ATCC BAA-301 / DSM 14385 / NBRC 107922 / TMO) (Thermotoga lettingae)).